A 131-amino-acid polypeptide reads, in one-letter code: MSYTHILVAVAVTPESHQLLAKAVSIARPVQAKVSLITLASDPELYNQFAAPMMEDLRAVMHEETENFLKMLGEKADYPIEQTFIASGELSQHILAVCRKHHVDLVICGNHNHSFFSRASCSAKVSSAPAR.

Belongs to the universal stress protein A family.

The protein localises to the cytoplasm. In terms of biological role, required for resistance to DNA-damaging agents. The chain is Universal stress protein C (uspC) from Salmonella typhi.